The primary structure comprises 229 residues: uncharacterized protein (229 aa).

This is an uncharacterized protein from Dictyostelium discoideum (Social amoeba).